Here is a 459-residue protein sequence, read N- to C-terminus: MAP kinase-interacting serine/threonine-protein kinase 2 (459 aa).

A disordered region spans residues 37–67; that stretch reads DFSPQCEARPDMPSSQPIDIPDAKKRGRKKK. Positions 60–66 match the Nuclear localization signal motif; the sequence is KKRGRKK. The residue at position 74 (Ser-74) is a Phosphoserine. The Protein kinase domain maps to 84-368; sequence QLQEDVLGEG…AAQVLQHPWV (285 aa). Residues 90–98 and Lys-113 each bind ATP; that span reads LGEGAHARV. 160–162 lines the staurosporine pocket; the sequence is EKM. Asp-205 acts as the Proton acceptor in catalysis. Glu-209 is a binding site for staurosporine. Phosphothreonine is present on residues Thr-244 and Thr-249. 3 residues coordinate Zn(2+): Cys-299, Cys-311, and Cys-314. Thr-379 is subject to Phosphothreonine. A phosphoserine mark is found at Ser-431 and Ser-434. The MAP kinase binding signature appears at 438 to 442; it reads LAQRR. Ser-446 is subject to Phosphoserine. Position 450 is a phosphothreonine (Thr-450).

This sequence belongs to the protein kinase superfamily. CAMK Ser/Thr protein kinase family. Interacts with ESR2 and EIF4E in the nucleus. Monomer. Interacts with the C-terminal regions of EIF4G1 and EIF4G2; this interaction is promoted when MAPK pathways are repressed but repressed upon ERK proteins activation. Also binds to dephosphorylated MAPK3/ERK1 and MAPK1/ERK2. Interaction with phosphorylated MAPK3/ERK1 and MAPK1/ERK2 protects it from dephosphorylation and inactivation. It depends on Mg(2+) as a cofactor. Requires Zn(2+) as cofactor. Post-translationally, dual phosphorylation of Thr-244 and Thr-249 activates the kinase. Phosphorylation of Thr-379 activates the kinase. Phosphorylated upon arsenic trioxide As(2)O(3) treatment. Phosphorylated by MAPK1/ERK2, MAPK11 and MAPK14. Dephosphorylated by PP2A. In terms of tissue distribution, ubiquitously expressed in all tissues examined, with high levels in skeletal muscle and low levels in brain.

It is found in the cytoplasm. It localises to the nucleus. The protein localises to the PML body. The enzyme catalyses L-seryl-[protein] + ATP = O-phospho-L-seryl-[protein] + ADP + H(+). The catalysed reaction is L-threonyl-[protein] + ATP = O-phospho-L-threonyl-[protein] + ADP + H(+). With respect to regulation, inhibited by CGP57380 and staurosporine. In terms of biological role, serine/threonine-protein kinase that phosphorylates SFPQ/PSF, HNRNPA1 and EIF4E. May play a role in the response to environmental stress and cytokines. Appears to regulate translation by phosphorylating EIF4E, thus increasing the affinity of this protein for the 7-methylguanosine-containing mRNA cap. Required for mediating PP2A-inhibition-induced EIF4E phosphorylation. Triggers EIF4E shuttling from cytoplasm to nucleus. Enhances the formation of EIF4F complex in pachytene spermatocytes, thus promoting mRNA translation during spermatogenesis. Displays a high basal kinase activity. Acts as a mediator of the suppressive effects of IFNgamma on hematopoiesis. Negative regulator for signals that control generation of arsenic trioxide As(2)O(3)-dependent apoptosis and anti-leukemic responses. Involved in anti-apoptotic signaling in response to serum withdrawal. In Mus musculus (Mouse), this protein is MAP kinase-interacting serine/threonine-protein kinase 2 (Mknk2).